Consider the following 103-residue polypeptide: Small ribosomal subunit protein uS10 (103 aa).

It belongs to the universal ribosomal protein uS10 family. As to quaternary structure, part of the 30S ribosomal subunit.

In terms of biological role, involved in the binding of tRNA to the ribosomes. This chain is Small ribosomal subunit protein uS10, found in Bordetella parapertussis (strain 12822 / ATCC BAA-587 / NCTC 13253).